Consider the following 116-residue polypeptide: Histone H2B (116 aa).

The segment covering Thr-1–Lys-11 has biased composition (basic residues). The tract at residues Thr-1–Lys-25 is disordered. 3 positions are modified to N6-acetyllysine: Lys-4, Lys-11, and Lys-14. Ser-103 carries O-linked (GlcNAc) serine glycosylation. Lys-111 is covalently cross-linked (Glycyl lysine isopeptide (Lys-Gly) (interchain with G-Cter in ubiquitin)).

The nucleosome is a histone octamer containing two molecules each of H2A, H2B, H3 and H4 assembled in one H3-H4 heterotetramer and two H2A-H2B heterodimers. The octamer wraps approximately 147 bp of DNA. Monoubiquitination gives a specific tag for epigenetic transcriptional activation and is also prerequisite for histone H3 'Lys-4' and 'Lys-79' methylation. Post-translationally, glcNAcylation at Ser-103 promotes monoubiquitination of Lys-111. It fluctuates in response to extracellular glucose, and associates with transcribed genes.

It is found in the nucleus. Its subcellular location is the chromosome. Its function is as follows. Core component of nucleosome. Nucleosomes wrap and compact DNA into chromatin, limiting DNA accessibility to the cellular machineries which require DNA as a template. Histones thereby play a central role in transcription regulation, DNA repair, DNA replication and chromosomal stability. DNA accessibility is regulated via a complex set of post-translational modifications of histones, also called histone code, and nucleosome remodeling. Functionally, a mixture of histones H2B and H4 has antimicrobial activity against the Gram-positive bacterium M.luteus. The protein is Histone H2B of Penaeus vannamei (Whiteleg shrimp).